Consider the following 370-residue polypeptide: Homospermidine synthase 1 (370 aa).

Belongs to the deoxyhypusine synthase family. In terms of assembly, homotetramer. Requires NAD(+) as cofactor. In terms of processing, the N-terminus is blocked. In terms of tissue distribution, expressed in roots.

It carries out the reaction putrescine + spermidine = sym-homospermidine + propane-1,3-diamine. It participates in alkaloid biosynthesis; pyrrolizidine alkaloid biosynthesis. Its function is as follows. Catalyzes the transfer of an aminobutyl unit from spermidine onto putrescine. The resulting polyamine homospermidine is a precursor in the biosynthesis of pyrrolizidine alkaloids. The protein is Homospermidine synthase 1 (HSS1) of Senecio vernalis (Spring groundsel).